A 468-amino-acid chain; its full sequence is Mitochondrial dynamics protein MID51 (468 aa).

Topologically, residues 1–29 (MAGVNGDRKGKKDDNGLGTAIDFVLSNAK) are mitochondrial intermembrane. The helical transmembrane segment at 30 to 47 (LVLGVGGAAMLGIATLAV) threads the bilayer. The Cytoplasmic portion of the chain corresponds to 48–468 (KRMYDRALSA…SDPESLLRTV (421 aa)). Residues 50–196 (MYDRALSAPS…LSGSLYDDLQ (147 aa)) form a dimerization region. Positions 56 to 123 (SAPSSPTKAD…RGLARGGRPA (68 aa)) are disordered. Positions 91–108 (QNVSRSLQTLPTSSSSFK) are enriched in polar residues. The important for interaction with DNM1L stretch occupies residues 161-170 (AALDICAELR). ADP is bound by residues S188, S190, and H202. Positions 235 to 244 (RRENLEYFPR) are important for interaction with DNM1L. ADP is bound by residues S344, R346, and K372.

The protein belongs to the MID49/MID51 family. As to quaternary structure, homodimer.

Its subcellular location is the mitochondrion outer membrane. Mitochondrial outer membrane protein which regulates mitochondrial fission/fusion dynamics. Promotes the recruitment and association of the fission mediator dynamin-related protein 1 (DNM1L) to the mitochondrial surface independently of the mitochondrial fission FIS1 and MFF proteins. Regulates DNM1L GTPase activity and DNM1L oligomerization. The protein is Mitochondrial dynamics protein MID51 (mief1) of Danio rerio (Zebrafish).